The following is a 1333-amino-acid chain: DNA-directed RNA polymerase subunit beta' (1333 aa).

Zn(2+)-binding residues include cysteine 60, cysteine 62, cysteine 75, and cysteine 78. The Mg(2+) site is built by aspartate 535, aspartate 537, and aspartate 539. Zn(2+)-binding residues include cysteine 901, cysteine 983, cysteine 990, and cysteine 993.

Belongs to the RNA polymerase beta' chain family. The RNAP catalytic core consists of 2 alpha, 1 beta, 1 beta' and 1 omega subunit. When a sigma factor is associated with the core the holoenzyme is formed, which can initiate transcription. Requires Mg(2+) as cofactor. The cofactor is Zn(2+).

The enzyme catalyses RNA(n) + a ribonucleoside 5'-triphosphate = RNA(n+1) + diphosphate. Its function is as follows. DNA-dependent RNA polymerase catalyzes the transcription of DNA into RNA using the four ribonucleoside triphosphates as substrates. The polypeptide is DNA-directed RNA polymerase subunit beta' (Corynebacterium glutamicum (strain R)).